Consider the following 518-residue polypeptide: Gypsy retrotransposon integrase-like protein 1 (518 aa).

The 163-residue stretch at 130 to 292 (QQHLPMVGNP…TPYFQMFNRN (163 aa)) folds into the Integrase catalytic domain. Ser-498 bears the Phosphoserine mark.

In Mus musculus (Mouse), this protein is Gypsy retrotransposon integrase-like protein 1 (Gin1).